The chain runs to 416 residues: YYTPKYETKDTDILAAFRMTPQPGVPPEEAGAAVAAESSTGTWTTVWTDGLTSLDRYKGRCYDIEPVAGEDNQYIAYVAYPLDLFEEGSVTNMFTSIVGNVFGFKALRALGLEDLRIPPAYSKTFIGPPHGIQVERDKLNKYGRPLLGCTIKPKLGLSAKNYGRAVYECLRGGLDSTKDDENVNSQPFMRWRDRFVSVAEALFKAQAETGEIKGHYLNATAGTCEEMMKRAAFARESGVPITMHDYLTGGFTANTSLAFYCRDNGLLLHIHRAMHAVIDRQRNHGIHFRVLAKALRMSGGDHVHAGTVVGKLEGERDVTLGFVDLLRDDYIEKDRSRGIYFTQDWVSMPGVFPVASGGIHVWHMPALTEIFGDDSVSQFGGGTLGHPGGNAPGAVANRVALEACVQARNEGRDLAR.

Substrate is bound by residues N100 and T150. The Proton acceptor role is filled by K152. K154 is a binding site for substrate. 3 residues coordinate Mg(2+): K178, D180, and E181. K178 carries the post-translational modification N6-carboxylysine. H271 serves as the catalytic Proton acceptor. 3 residues coordinate substrate: R272, H304, and S356.

It belongs to the RuBisCO large chain family. Type I subfamily. Heterohexadecamer of 8 large chains and 8 small chains; disulfide-linked. The disulfide link is formed within the large subunit homodimers. It depends on Mg(2+) as a cofactor. In terms of processing, the disulfide bond which can form in the large chain dimeric partners within the hexadecamer appears to be associated with oxidative stress and protein turnover.

The protein localises to the plastid. It localises to the chloroplast. The enzyme catalyses 2 (2R)-3-phosphoglycerate + 2 H(+) = D-ribulose 1,5-bisphosphate + CO2 + H2O. It catalyses the reaction D-ribulose 1,5-bisphosphate + O2 = 2-phosphoglycolate + (2R)-3-phosphoglycerate + 2 H(+). Its function is as follows. RuBisCO catalyzes two reactions: the carboxylation of D-ribulose 1,5-bisphosphate, the primary event in carbon dioxide fixation, as well as the oxidative fragmentation of the pentose substrate in the photorespiration process. Both reactions occur simultaneously and in competition at the same active site. In Cheiropleuria bicuspis (Fern), this protein is Ribulose bisphosphate carboxylase large chain (rbcL).